A 493-amino-acid chain; its full sequence is Cysteine--tRNA ligase (493 aa).

Cysteine 29 contributes to the Zn(2+) binding site. Residues 31 to 41 (VTVYDLCHLGH) carry the 'HIGH' region motif. Zn(2+)-binding residues include cysteine 213, histidine 238, and glutamate 242. A 'KMSKS' region motif is present at residues 270 to 274 (KMSKS). Residue lysine 273 coordinates ATP.

This sequence belongs to the class-I aminoacyl-tRNA synthetase family. Monomer. It depends on Zn(2+) as a cofactor.

It is found in the cytoplasm. It carries out the reaction tRNA(Cys) + L-cysteine + ATP = L-cysteinyl-tRNA(Cys) + AMP + diphosphate. This Parasynechococcus marenigrum (strain WH8102) protein is Cysteine--tRNA ligase.